The chain runs to 349 residues: ATPase GET3 (349 aa).

ATP is bound at residue K26–T33. D57 is a catalytic residue. Positions 243 and 270 each coordinate ATP. The Zn(2+) site is built by C280 and C283.

The protein belongs to the arsA ATPase family. Homodimer. Component of the Golgi to ER traffic (GET) complex, which is composed of GET1, GET2 and GET3. Within the complex, GET1 and GET2 form a heterotetramer which is stabilized by phosphatidylinositol binding and which binds to the GET3 homodimer. Interacts with the chloride channel protein GEF1.

The protein resides in the cytoplasm. Its subcellular location is the endoplasmic reticulum. It localises to the golgi apparatus. Its function is as follows. ATPase required for the post-translational delivery of tail-anchored (TA) proteins to the endoplasmic reticulum. Recognizes and selectively binds the transmembrane domain of TA proteins in the cytosol. This complex then targets to the endoplasmic reticulum by membrane-bound receptors GET1 and GET2, where the tail-anchored protein is released for insertion. This process is regulated by ATP binding and hydrolysis. ATP binding drives the homodimer towards the closed dimer state, facilitating recognition of newly synthesized TA membrane proteins. ATP hydrolysis is required for insertion. Subsequently, the homodimer reverts towards the open dimer state, lowering its affinity for the GET1-GET2 receptor, and returning it to the cytosol to initiate a new round of targeting. Cooperates with the HDEL receptor ERD2 to mediate the ATP-dependent retrieval of resident ER proteins that contain a C-terminal H-D-E-L retention signal from the Golgi to the ER. Involved in low-level resistance to the oxyanions arsenite and arsenate, and in heat tolerance. This Clavispora lusitaniae (strain ATCC 42720) (Yeast) protein is ATPase GET3.